A 170-amino-acid chain; its full sequence is Large ribosomal subunit protein uL22z (170 aa).

The protein belongs to the universal ribosomal protein uL22 family.

The sequence is that of Large ribosomal subunit protein uL22z from Hordeum vulgare (Barley).